Consider the following 193-residue polypeptide: N-(5'-phosphoribosyl)anthranilate isomerase (193 aa).

Belongs to the TrpF family.

The enzyme catalyses N-(5-phospho-beta-D-ribosyl)anthranilate = 1-(2-carboxyphenylamino)-1-deoxy-D-ribulose 5-phosphate. Its pathway is amino-acid biosynthesis; L-tryptophan biosynthesis; L-tryptophan from chorismate: step 3/5. The chain is N-(5'-phosphoribosyl)anthranilate isomerase from Streptococcus mutans serotype c (strain ATCC 700610 / UA159).